The chain runs to 89 residues: Large ribosomal subunit protein bL27 (89 aa).

A disordered region spans residues 1–21; the sequence is MAHKKGASSSRNGRDSNAQRL. Polar residues predominate over residues 7 to 19; it reads ASSSRNGRDSNAQ.

The protein belongs to the bacterial ribosomal protein bL27 family.

This chain is Large ribosomal subunit protein bL27, found in Frankia alni (strain DSM 45986 / CECT 9034 / ACN14a).